A 227-amino-acid polypeptide reads, in one-letter code: Protein FAM3C (227 aa).

A signal peptide spans 1–30 (MMRAGGLLKLGVLVSVLFVAVFLAFELLES). 2 cysteine pairs are disulfide-bonded: Cys58–Cys86 and Cys64–Cys221. One can recognise a GG-type lectin domain in the interval 67-225 (DHFAFKITSG…LEMEGCIPIK (159 aa)).

The protein belongs to the FAM3 family.

The protein localises to the secreted. Its function is as follows. Involved in retinal laminar formation. This Danio rerio (Zebrafish) protein is Protein FAM3C (fam3c).